A 222-amino-acid polypeptide reads, in one-letter code: Protein DEHYDRATION-INDUCED 19 homolog 6 (222 aa).

Position 116 is a phosphoserine (Ser-116).

Belongs to the Di19 family. Post-translationally, phosphorylated in vitro by CPK3 or CPK11. Expressed in seedlings, roots, leaves, stems, flowers and siliques.

It localises to the nucleus. This is Protein DEHYDRATION-INDUCED 19 homolog 6 (DI19-6) from Arabidopsis thaliana (Mouse-ear cress).